The sequence spans 236 residues: Uridylate kinase (236 aa).

Lys-9–Gly-12 is a binding site for ATP. The involved in allosteric activation by GTP stretch occupies residues Gly-17–Gly-22. Residue Gly-51 participates in UMP binding. ATP contacts are provided by Gly-52 and Arg-56. UMP-binding positions include Asp-72 and Thr-133–Thr-140. ATP is bound by residues Thr-160, Tyr-166, and Asp-169.

The protein belongs to the UMP kinase family. Homohexamer.

The protein localises to the cytoplasm. The catalysed reaction is UMP + ATP = UDP + ADP. It functions in the pathway pyrimidine metabolism; CTP biosynthesis via de novo pathway; UDP from UMP (UMPK route): step 1/1. Allosterically activated by GTP. Inhibited by UTP. Its function is as follows. Catalyzes the reversible phosphorylation of UMP to UDP. The polypeptide is Uridylate kinase (Helicobacter hepaticus (strain ATCC 51449 / 3B1)).